A 74-amino-acid chain; its full sequence is MEKKSLAALSFLLLLVLFVAQEIVVTEANTCEHLADTYRGVCFTNASCDDHCKNKAHLISGTCHDWKCFCTQNC.

Residues 1–28 (MEKKSLAALSFLLLLVLFVAQEIVVTEA) form the signal peptide. 4 disulfides stabilise this stretch: Cys-31–Cys-74, Cys-42–Cys-63, Cys-48–Cys-68, and Cys-52–Cys-70.

It belongs to the DEFL family. In terms of tissue distribution, pods.

The protein localises to the secreted. Its function is as follows. Possesses antifungal activity. This is Defensin-like protein 39 (PI39) from Pisum sativum (Garden pea).